Here is a 252-residue protein sequence, read N- to C-terminus: Imidazole glycerol phosphate synthase subunit HisF (252 aa).

Catalysis depends on residues Asp11 and Asp130.

The protein belongs to the HisA/HisF family. In terms of assembly, heterodimer of HisH and HisF.

It localises to the cytoplasm. It carries out the reaction 5-[(5-phospho-1-deoxy-D-ribulos-1-ylimino)methylamino]-1-(5-phospho-beta-D-ribosyl)imidazole-4-carboxamide + L-glutamine = D-erythro-1-(imidazol-4-yl)glycerol 3-phosphate + 5-amino-1-(5-phospho-beta-D-ribosyl)imidazole-4-carboxamide + L-glutamate + H(+). It participates in amino-acid biosynthesis; L-histidine biosynthesis; L-histidine from 5-phospho-alpha-D-ribose 1-diphosphate: step 5/9. Its function is as follows. IGPS catalyzes the conversion of PRFAR and glutamine to IGP, AICAR and glutamate. The HisF subunit catalyzes the cyclization activity that produces IGP and AICAR from PRFAR using the ammonia provided by the HisH subunit. The polypeptide is Imidazole glycerol phosphate synthase subunit HisF (Rhodospirillum rubrum (strain ATCC 11170 / ATH 1.1.1 / DSM 467 / LMG 4362 / NCIMB 8255 / S1)).